The primary structure comprises 545 residues: Cytochrome bc1 complex cytochrome b subunit (545 aa).

The chain crosses the membrane as a helical span at residues 54 to 74; sequence VCLYSFIIIILTGVYLTLFFH. H118 and H132 together coordinate heme. 3 helical membrane-spanning segments follow: residues 122 to 142, 150 to 170, and 182 to 202; these read ALIF…TGAF, WLFG…GYSL, and FMEG…FFLF. The heme site is built by H219 and H234. 5 helical membrane passes run 220–240, 269–289, 335–355, 385–405, and 413–433; these read ILLL…LVFY, AGGF…IATI, LVLG…AIAV, FGVA…NDLW, and INAI…VAFI.

The protein belongs to the cytochrome b family. The cytochrome bc1 complex is composed of a cytochrome b (QcrB), the Rieske iron-sulfur protein (QcrA) and a diheme cytochrome c (QcrC) subunit. Heme serves as cofactor.

Its subcellular location is the cell membrane. It catalyses the reaction a quinol + 2 Fe(III)-[cytochrome c](out) = a quinone + 2 Fe(II)-[cytochrome c](out) + 2 H(+)(out). Functionally, cytochrome b subunit of the cytochrome bc1 complex, an essential component of the respiratory electron transport chain required for ATP synthesis. The bc1 complex catalyzes the oxidation of ubiquinol and the reduction of cytochrome c in the respiratory chain. The bc1 complex operates through a Q-cycle mechanism that couples electron transfer to generation of the proton gradient that drives ATP synthesis. The cytochrome b subunit contains two ubiquinol reactive sites: the oxidation (QP) site and the reduction (QN) site. The sequence is that of Cytochrome bc1 complex cytochrome b subunit (qcrB) from Streptomyces coelicolor (strain ATCC BAA-471 / A3(2) / M145).